Here is a 333-residue protein sequence, read N- to C-terminus: Taste receptor type 2 member 38 (333 aa).

Residues 1–17 (MLTLTRIRTVSYEVRST) are Extracellular-facing. A helical membrane pass occupies residues 18–38 (FLFISVLEFAVGFLTNAFVFL). Residues 39–55 (VNFWDVVKRQPLSNSDC) are Cytoplasmic-facing. Residues 56-76 (VLLCLSISRLFLHGLLFLSAI) traverse the membrane as a helical segment. The Extracellular portion of the chain corresponds to 77–94 (QLTHFQKLSEPLNHSYQA). A helical transmembrane segment spans residues 95-115 (IIMLWMIANQANLWLAACLSL). The Cytoplasmic segment spans residues 116 to 142 (LYCSKLIRFSHTFLICLASWVSRKISQ). The chain crosses the membrane as a helical span at residues 143–163 (MLLGIILCSCICTVLCVWCFF). Topologically, residues 164-190 (SRPHFTVTTVLFMNNNTRLNWQIKDLN) are extracellular. A glycan (N-linked (GlcNAc...) asparagine) is linked at asparagine 178. The helical transmembrane segment at 191 to 211 (LFYSFLFCYLWSVPPFLLFLV) threads the bilayer. The Cytoplasmic portion of the chain corresponds to 212-251 (SSGMLTVSLGRHMRTMKVYIRDSRDPSLEAHIKALKSLVS). Residues 252-272 (FFCFFVISSCAAFISVPLLIL) traverse the membrane as a helical segment. Over 273–276 (WRDK) the chain is Extracellular. Residues 277-297 (IGVMVCVGIMAACPSGHAAVL) traverse the membrane as a helical segment. Over 298 to 333 (ISGNAKLRRAVTTILLWAQSSLKVRADHKADSRTPC) the chain is Cytoplasmic.

This sequence belongs to the G-protein coupled receptor T2R family.

It localises to the membrane. Functionally, receptor that may play a role in the perception of bitterness and is gustducin-linked. May play a role in sensing the chemical composition of the gastrointestinal content. The activity of this receptor may stimulate alpha gustducin, mediate PLC-beta-2 activation and lead to the gating of TRPM5. This chain is Taste receptor type 2 member 38 (TAS2R38), found in Gorilla gorilla gorilla (Western lowland gorilla).